We begin with the raw amino-acid sequence, 311 residues long: Coproporphyrin III ferrochelatase 1 (311 aa).

Residues tyrosine 12, arginine 29, 45–46 (RY), serine 53, and tyrosine 124 contribute to the Fe-coproporphyrin III site. Residues histidine 182 and glutamate 263 each contribute to the Fe(2+) site.

Belongs to the ferrochelatase family.

The protein localises to the cytoplasm. It catalyses the reaction Fe-coproporphyrin III + 2 H(+) = coproporphyrin III + Fe(2+). Its pathway is porphyrin-containing compound metabolism; protoheme biosynthesis. Involved in coproporphyrin-dependent heme b biosynthesis. Catalyzes the insertion of ferrous iron into coproporphyrin III to form Fe-coproporphyrin III. This chain is Coproporphyrin III ferrochelatase 1, found in Bacillus thuringiensis subsp. konkukian (strain 97-27).